The chain runs to 41 residues: Large ribosomal subunit protein bL36 (41 aa).

This sequence belongs to the bacterial ribosomal protein bL36 family.

This chain is Large ribosomal subunit protein bL36, found in Caulobacter vibrioides (strain ATCC 19089 / CIP 103742 / CB 15) (Caulobacter crescentus).